Reading from the N-terminus, the 56-residue chain is MFRFIKDSILELKKVTWPKYNEVVGNGKQVFWLVLFVSIFLGIVDYLMFLVVTYVF.

Residues 30-50 (VFWLVLFVSIFLGIVDYLMFL) traverse the membrane as a helical segment.

This sequence belongs to the SecE/SEC61-gamma family. As to quaternary structure, component of the Sec protein translocase complex. Heterotrimer consisting of SecY, SecE and SecG subunits. The heterotrimers can form oligomers, although 1 heterotrimer is thought to be able to translocate proteins. Interacts with the ribosome. Interacts with SecDF, and other proteins may be involved. Interacts with SecA.

It localises to the cell inner membrane. Functionally, essential subunit of the Sec protein translocation channel SecYEG. Clamps together the 2 halves of SecY. May contact the channel plug during translocation. The sequence is that of Protein translocase subunit SecE from Borreliella burgdorferi (strain ATCC 35210 / DSM 4680 / CIP 102532 / B31) (Borrelia burgdorferi).